The chain runs to 182 residues: CDP-diacylglycerol--glycerol-3-phosphate 3-phosphatidyltransferase (182 aa).

Topologically, residues 2–12 (QFNIPTLLTLF) are cytoplasmic. Residues 13 to 37 (RVALIPFFVLAFYLPFVWAPLLCAL) form a helical membrane-spanning segment. Residues 38-60 (IFVFAAVTDWFDGFLARRWKQTT) are Periplasmic-facing. The chain crosses the membrane as a helical span at residues 61 to 81 (RFGAFLDPVADKVMVAVALVL). Over 82-86 (VAEYY) the chain is Cytoplasmic. The helical transmembrane segment at 87-107 (HSWWITLPAATMIAREIIISA) threads the bilayer. Residues 108–145 (LREWMAEIGKRSSVAVSWIGKVKTTAQMMALFALLWRP) lie on the Periplasmic side of the membrane. Residues 146–168 (ERIVEGIGVAALYIAAVLTFWSM) form a helical membrane-spanning segment. Residues 169–181 (FQYLNAARHDLLE) are Cytoplasmic-facing.

The protein belongs to the CDP-alcohol phosphatidyltransferase class-I family.

It localises to the cell inner membrane. The enzyme catalyses a CDP-1,2-diacyl-sn-glycerol + sn-glycerol 3-phosphate = a 1,2-diacyl-sn-glycero-3-phospho-(1'-sn-glycero-3'-phosphate) + CMP + H(+). It functions in the pathway phospholipid metabolism; phosphatidylglycerol biosynthesis; phosphatidylglycerol from CDP-diacylglycerol: step 1/2. Its function is as follows. Catalyzes the conversion of cytidine diphosphate diacylglycerol (CDP-DG) and glycerol 3-phosphate into phosphatidylglycerol. Essential for the synthesis of anionic phospholipids, thereby playing a role in balancing the ratio of zwitterionic and anionic phospholipids, which is thought to be important for normal membrane function. The polypeptide is CDP-diacylglycerol--glycerol-3-phosphate 3-phosphatidyltransferase (Pectobacterium atrosepticum (strain SCRI 1043 / ATCC BAA-672) (Erwinia carotovora subsp. atroseptica)).